The chain runs to 409 residues: Nucleoprotein (409 aa).

4 disordered regions span residues 1–31 (MASG…GSSG), 44–84 (LNSP…KGGR), 164–196 (RSGR…EDDL), and 238–258 (VDQV…DDKM). A compositionally biased stretch (low complexity) spans 15 to 31 (PVIKLGGPKPPKVGSSG). The interval 29 to 160 (SSGNVSWFQA…GNFRWDFIPL (132 aa)) is RNA-binding. In terms of domain architecture, CoV N NTD spans 31–156 (GNVSWFQAIK…GGPDGNFRWD (126 aa)). Residues 70-84 (YWRRQARFKPGKGGR) are compositionally biased toward basic residues. Over residues 166-179 (GRSTAASSAASSRA) the composition is skewed to low complexity. Composition is skewed to basic and acidic residues over residues 180-192 (PSRE…RSGS) and 247-258 (KGKEGNFGDDKM). Phosphoserine; by host is present on residues Ser-190 and Ser-192. A CoV N CTD domain is found at 215-331 (TKAKADEMAH…QCVDGVGTRP (117 aa)). Residues 226-333 (RYCKRTIPPN…VDGVGTRPKD (108 aa)) are dimerization. A disulfide bridge links Cys-320 with Cys-323. The tract at residues 326 to 409 (GVGTRPKDDE…GDSALGENEL (84 aa)) is disordered. Residues 358-367 (QRPKKEKKPK) show a composition bias toward basic residues. A compositionally biased stretch (basic and acidic residues) spans 368-384 (KQDDEVDKALTSDEERN). Thr-378 carries the phosphothreonine; by host modification. Ser-379 bears the Phosphoserine; by host mark.

The protein belongs to the gammacoronavirus nucleocapsid protein family. Homooligomer. Both monomeric and oligomeric forms interact with RNA. Interacts with protein M. Interacts with NSP3; this interaction serves to tether the genome to the newly translated replicase-transcriptase complex at a very early stage of infection. ADP-ribosylated. The ADP-ribosylation is retained in the virion during infection. Post-translationally, phosphorylated on serine and threonine residues.

It localises to the virion. It is found in the host endoplasmic reticulum-Golgi intermediate compartment. The protein localises to the host Golgi apparatus. Functionally, packages the positive strand viral genome RNA into a helical ribonucleocapsid (RNP) and plays a fundamental role during virion assembly through its interactions with the viral genome and membrane protein M. Plays an important role in enhancing the efficiency of subgenomic viral RNA transcription as well as viral replication. The chain is Nucleoprotein from Gallus gallus (Chicken).